Consider the following 527-residue polypeptide: Putative zinc finger CCCH domain-containing protein 64 (527 aa).

The disordered stretch occupies residues glycine 103 to valine 127. The segment at arginine 213–aspartate 241 adopts a C3H1-type zinc-finger fold.

This is Putative zinc finger CCCH domain-containing protein 64 from Oryza sativa subsp. japonica (Rice).